The chain runs to 75 residues: Acyl carrier protein (75 aa).

A Carrier domain is found at 1 to 74 (MLDKVKEIIV…DVINYIEANK (74 aa)). At Ser-34 the chain carries O-(pantetheine 4'-phosphoryl)serine.

Belongs to the acyl carrier protein (ACP) family. Post-translationally, 4'-phosphopantetheine is transferred from CoA to a specific serine of apo-ACP by AcpS. This modification is essential for activity because fatty acids are bound in thioester linkage to the sulfhydryl of the prosthetic group.

The protein localises to the cytoplasm. The protein operates within lipid metabolism; fatty acid biosynthesis. In terms of biological role, carrier of the growing fatty acid chain in fatty acid biosynthesis. In Fusobacterium nucleatum subsp. nucleatum (strain ATCC 25586 / DSM 15643 / BCRC 10681 / CIP 101130 / JCM 8532 / KCTC 2640 / LMG 13131 / VPI 4355), this protein is Acyl carrier protein.